Here is a 358-residue protein sequence, read N- to C-terminus: L-Ala-D/L-Glu epimerase (358 aa).

Substrate contacts are provided by arginine 24, threonine 135, and lysine 160. Lysine 162 functions as the Proton acceptor; specific for (R)-substrate epimerization in the catalytic mechanism. Positions 190, 218, and 243 each coordinate Mg(2+). Residue lysine 267 is the Proton acceptor; specific for (S)-substrate epimerization of the active site. Positions 295, 320, and 322 each coordinate substrate.

The protein belongs to the mandelate racemase/muconate lactonizing enzyme family. Mg(2+) is required as a cofactor.

It carries out the reaction L-alanyl-L-glutamate = L-alanyl-D-glutamate. Its pathway is cell wall degradation; peptidoglycan degradation. Catalyzes the epimerization of L-Ala-D-Glu to L-Ala-L-Glu and has probably a role in the metabolism of the murein peptide, of which L-Ala-D-Glu is a component. Is also able to catalyze the epimerization of L-Ala-D-Asp. The protein is L-Ala-D/L-Glu epimerase of Clostridium acetobutylicum (strain ATCC 824 / DSM 792 / JCM 1419 / IAM 19013 / LMG 5710 / NBRC 13948 / NRRL B-527 / VKM B-1787 / 2291 / W).